Here is a 528-residue protein sequence, read N- to C-terminus: Catalase (528 aa).

Basic and acidic residues predominate over residues M1–Q22. A disordered region spans residues M1–G32. Active-site residues include H75 and N148. NADP(+) is bound by residues H194, S201, R203, N213, K237, W303, H305, and K306. Y358 contributes to the heme binding site. The Microbody targeting signal; atypical motif lies at K525–L528.

This sequence belongs to the catalase family. Homotetramer. Heme serves as cofactor. Requires NADP(+) as cofactor.

It is found in the peroxisome matrix. It carries out the reaction 2 H2O2 = O2 + 2 H2O. Functionally, catalyzes the degradation of hydrogen peroxide (H(2)O(2)) generated by peroxisomal oxidases to water and oxygen, thereby protecting cells from the toxic effects of hydrogen peroxide. This is Catalase (cat) from Glandirana rugosa (Japanese wrinkled frog).